Reading from the N-terminus, the 231-residue chain is uncharacterized protein (231 aa).

NADP(+) is bound at residue 10–34 (VVTGAGSGIGEAIATLLHEEGAKVV). Ser140 contributes to the substrate binding site. Tyr153 acts as the Proton acceptor in catalysis.

Belongs to the short-chain dehydrogenases/reductases (SDR) family.

This is an uncharacterized protein from Staphylococcus aureus (strain COL).